A 508-amino-acid chain; its full sequence is 2,3-bisphosphoglycerate-independent phosphoglycerate mutase (508 aa).

Asp14 and Ser64 together coordinate Mn(2+). Ser64 serves as the catalytic Phosphoserine intermediate. Residues His125, 155–156 (RD), Arg187, Arg193, 259–262 (RADR), and Lys332 each bind substrate. Mn(2+) is bound by residues Asp399, His403, Asp440, His441, and His459.

The protein belongs to the BPG-independent phosphoglycerate mutase family. In terms of assembly, monomer. Mn(2+) serves as cofactor.

It carries out the reaction (2R)-2-phosphoglycerate = (2R)-3-phosphoglycerate. The protein operates within carbohydrate degradation; glycolysis; pyruvate from D-glyceraldehyde 3-phosphate: step 3/5. Functionally, catalyzes the interconversion of 2-phosphoglycerate and 3-phosphoglycerate. In Pseudomonas fluorescens (strain Pf0-1), this protein is 2,3-bisphosphoglycerate-independent phosphoglycerate mutase.